A 797-amino-acid chain; its full sequence is MKLNQFARLTPDFKVQVAELKQIGLQADPDDAFSQSATDLFNAFFPEAYTLAAKEDKLAQVAVNMDQTLAAWLAKKPSKMTRRDFYNVALQLLGFEAFTDFDLNDPFKMMTATKLPSLDHDLTSTADLLKAVYLLLNTRTKHLVSYLDDLANRGFLKDFQKKQKKPTHLLFNGKVQQVFDARQAVREVVWIESDMDTDHDGQRDLLEATIYRPKATDQGLKVPVLFTANPYFHGTNDVTAVTHVPETTLAVKTHGASKAEVTANPEEPANLPHHPVNGEATQAEAYAEENSMYAFNDYFLARGFAVVYSAGVGTRYSDGFRTTGGPEETDGAVAVIEWLTGKRRAFTNRTDGITIKAWWSTGLVAMTGKSYLATLAMAAATTGVDGLKTIVADAGISSWYDYYRENGLVVAPGGFQGEDADVLAVDTFSRQKSGGDLINIKQAWEKHLATITHDQDRTTGAYNTWWDARNYRKNANKVKADVVLIHGLNDWNVKPTNAIKFWEAIADLPIQKKLVLHQGQHVYVHNVRSLDFLDMMNLWLTHELLGEANGAEDVLPNVVVQDNVAVQTWSAYQNFASPAAEHVTNTRNLKTDFEAATDQFTDHATATFNAQHDTSASFETAIITPNSAYANSRLWLTQPPLERDQTLEGIPHLELTLAIDAPTGILSVRLIDLGMAKRFGETAATVALNGLQLGFDYKTTDILEFKPTAKPTPSKLISLGHINLQNPKNAYEVQRITPGQPFHISLDLQPTHYHLPAGRQLALVIHGADMAQTIRPIKTTHYQIDLANSSITLPYRI.

Catalysis depends on charge relay system residues Ser370, Asp490, and His521.

The protein belongs to the peptidase S15 family. Homodimer.

The protein localises to the cytoplasm. The enzyme catalyses Hydrolyzes Xaa-Pro-|- bonds to release unblocked, N-terminal dipeptides from substrates including Ala-Pro-|-p-nitroanilide and (sequentially) Tyr-Pro-|-Phe-Pro-|-Gly-Pro-|-Ile.. Functionally, removes N-terminal dipeptides sequentially from polypeptides having unsubstituted N-termini provided that the penultimate residue is proline. This is Xaa-Pro dipeptidyl-peptidase from Lacticaseibacillus casei (strain BL23) (Lactobacillus casei).